Consider the following 468-residue polypeptide: Acyltransferase R4 (468 aa).

7 helical membrane-spanning segments follow: residues 21–41 (GILSIIIFNAHLTPIIILGYD), 70–90 (LFTIPIVKLVYSASPAVCLFF), 133–153 (LNLLAMASMIVPFVLVKTGFF), 252–272 (FLAALVVMGIAVGSLECPLFW), 308–328 (DPFGKAVVLAIGCYFASYPTW), 388–408 (FAVYLVHFCLVISFGPGLFSW), and 423–443 (IGFGIAYAVLFIGVLLAAAMF).

This sequence belongs to the acyltransferase 3 family.

The protein resides in the membrane. It functions in the pathway secondary metabolite biosynthesis. Functionally, acyltransferase; part of the gene cluster that mediates the biosynthesis of squalestatin S1 (SQS1, also known as zaragozic acid A), a heavily oxidized fungal polyketide that offers potent cholesterol lowering activity by targeting squalene synthase (SS). SQS1 is composed of a 2,8-dioxobicyclic[3.2.1]octane-3,4,5-tricarboxyclic acid core that is connected to two lipophilic polyketide arms. These initial steps feature the priming of an unusual benzoic acid starter unit onto the highly reducing polyketide synthase pks2, followed by oxaloacetate extension and product release to generate a tricarboxylic acid containing product. The phenylalanine ammonia lyase (PAL) M7 and the acyl-CoA ligase M9 are involved in transforming phenylalanine into benzoyl-CoA. The citrate synthase-like protein R3 is involved in connecting the C-alpha-carbons of the hexaketide chain and oxaloacetate to afford the tricarboxylic acid unit. The potential hydrolytic enzymes, M8 and M10, are in close proximity to pks2 and may participate in product release. On the other side, the tetraketide arm is synthesized by a the squalestatin tetraketide synthase pks1 and enzymatically esterified to the core in the last biosynthetic step, by the acetyltransferase M4. The biosynthesis of the tetraketide must involve 3 rounds of chain extension. After the first and second rounds methyl-transfer occurs, and in all rounds of extension the ketoreductase and dehydratase are active. The enoyl reductase and C-MeT of pks1 are not active in the final round of extension. The acetyltransferase M4 appears to have a broad substrate selectivity for its acyl CoA substrate, allowing the in vitro synthesis of novel squalestatins. The biosynthesis of SQS1 requires several oxidative steps likely performed by oxidoreductases M1, R1 and R2. Finally, in support of the identification of the cluster as being responsible for SQS1 production, the cluster contains a gene encoding a putative squalene synthase (SS) R6, suggesting a likely mechanism for self-resistance. This is Acyltransferase R4 from Phoma sp. (strain ATCC 20986 / MF5453).